Here is a 512-residue protein sequence, read N- to C-terminus: Beta-glucosidase 44 (512 aa).

An N-terminal signal peptide occupies residues 1–23; sequence MRHLSSPPWPLLLLLLLSSFTSG. Position 58 (Gln-58) interacts with a beta-D-glucoside. Asn-86 is a glycosylation site (N-linked (GlcNAc...) asparagine). Residues His-159 and 204 to 205 contribute to the a beta-D-glucoside site; that span reads NE. The active-site Proton donor is Glu-205. An intrachain disulfide couples Cys-224 to Cys-231. An N-linked (GlcNAc...) asparagine glycan is attached at Asn-230. Positions 347 and 419 each coordinate a beta-D-glucoside. Catalysis depends on Glu-419, which acts as the Nucleophile. The N-linked (GlcNAc...) asparagine glycan is linked to Asn-427. A beta-D-glucoside is bound by residues Trp-466, 473-474, and Phe-482; that span reads EW.

The protein belongs to the glycosyl hydrolase 1 family. As to quaternary structure, homodimer.

The protein resides in the secreted. The catalysed reaction is Hydrolysis of terminal, non-reducing beta-D-glucosyl residues with release of beta-D-glucose.. Hydrolyzes p-nitrophenyl beta-D-glucoside, p-nitrophenyl beta-D-mannoside, cellobiose, 4-methylumbelliferyl-beta-D-glucoside, laminarin, amygdalin, esculin and gentiobiose. This chain is Beta-glucosidase 44, found in Arabidopsis thaliana (Mouse-ear cress).